A 388-amino-acid chain; its full sequence is MRYLTSGESHGPQLTVIIEGVPANLEIKAEDINKEMFKRQGGYGRGRRMKIEKDTIEIVSGVRNGFTLGSPITLVVTNDDFTHWRKIMGVAPISDEERENMKRTITKPRPGHADLIGGMKYNHRDLRNVLERSSARETAARVAVGAVSKILLEQLDIHLYSRVVEIGGIKDKGLYDVDMFKNNVDKNDVRVIDENIAQQMRDKIDEAKKDGDSIGGVVQVMAENMPIGVGSYVHYDRKLDGRIAQGVVSINAFKGVSFGEGFKAAEKPGSEIQDEIHYNQDSGYFRATNHLGGFEGGMSNGMPIIVNGVMKPIPTLYKPLNSVDINTKEDFKATIERSDSCAVPAASVVCEHVVAFELAKAVLEEFQSNHMDQLVAQIKERRQLNIEF.

2 residues coordinate NADP(+): Arg39 and Arg45. Residues 132–134 (RSS), 251–252 (NA), Gly296, 311–315 (KPIPT), and Arg337 each bind FMN.

It belongs to the chorismate synthase family. As to quaternary structure, homotetramer. FMNH2 serves as cofactor.

The catalysed reaction is 5-O-(1-carboxyvinyl)-3-phosphoshikimate = chorismate + phosphate. It functions in the pathway metabolic intermediate biosynthesis; chorismate biosynthesis; chorismate from D-erythrose 4-phosphate and phosphoenolpyruvate: step 7/7. Functionally, catalyzes the anti-1,4-elimination of the C-3 phosphate and the C-6 proR hydrogen from 5-enolpyruvylshikimate-3-phosphate (EPSP) to yield chorismate, which is the branch point compound that serves as the starting substrate for the three terminal pathways of aromatic amino acid biosynthesis. This reaction introduces a second double bond into the aromatic ring system. This Staphylococcus epidermidis (strain ATCC 35984 / DSM 28319 / BCRC 17069 / CCUG 31568 / BM 3577 / RP62A) protein is Chorismate synthase.